Consider the following 81-residue polypeptide: Putative defensin-like protein 31 (81 aa).

The first 26 residues, 1–26, serve as a signal peptide directing secretion; that stretch reads MTSSSKCLFFVFLCLAALLTPYLAEA. Disulfide bonds link Cys-38–Cys-58, Cys-44–Cys-70, and Cys-48–Cys-72.

This sequence belongs to the DEFL family.

The protein resides in the secreted. The chain is Putative defensin-like protein 31 from Arabidopsis thaliana (Mouse-ear cress).